A 204-amino-acid polypeptide reads, in one-letter code: Dephospho-CoA kinase (204 aa).

One can recognise a DPCK domain in the interval 13 to 204 (RIGLTGGIAS…LWKNTIKKLV (192 aa)). An ATP-binding site is contributed by 21–26 (ASGKST).

Belongs to the CoaE family.

It localises to the cytoplasm. The enzyme catalyses 3'-dephospho-CoA + ATP = ADP + CoA + H(+). It participates in cofactor biosynthesis; coenzyme A biosynthesis; CoA from (R)-pantothenate: step 5/5. Functionally, catalyzes the phosphorylation of the 3'-hydroxyl group of dephosphocoenzyme A to form coenzyme A. The chain is Dephospho-CoA kinase from Prochlorococcus marinus subsp. pastoris (strain CCMP1986 / NIES-2087 / MED4).